The following is a 145-amino-acid chain: Catabolic 3-dehydroquinase (145 aa).

Y24 (proton acceptor) is an active-site residue. Residues N77, H83, and D90 each contribute to the substrate site. H103 functions as the Proton donor in the catalytic mechanism. Residues 104–105 (IT) and R114 each bind substrate.

The protein belongs to the type-II 3-dehydroquinase family. Homododecamer. Adopts a ring-like structure, composed of an arrangement of two hexameric rings stacked on top of one another.

It carries out the reaction 3-dehydroquinate = 3-dehydroshikimate + H2O. It functions in the pathway aromatic compound metabolism; 3,4-dihydroxybenzoate biosynthesis; 3,4-dihydroxybenzoate from 3-dehydroquinate: step 1/2. Its function is as follows. Is involved in the catabolism of quinate. Allows the utilization of quinate as carbon source via the beta-ketoadipate pathway. The chain is Catabolic 3-dehydroquinase from Clavispora lusitaniae (strain ATCC 42720) (Yeast).